Consider the following 481-residue polypeptide: Neuronal acetylcholine receptor subunit eat-2 (481 aa).

The signal sequence occupies residues 1 to 19; it reads MFLLLQILYILLFLNLADT. Residues 20–235 are Extracellular-facing; sequence SDDEYRLLKD…MHLKRRTMYY (216 aa). Asparagine 93 is a glycosylation site (N-linked (GlcNAc...) asparagine). The cysteines at positions 147 and 161 are disulfide-linked. The next 3 membrane-spanning stretches (helical) occupy residues 236-256, 264-284, and 292-312; these read GLNW…GFTM, VTLQ…VSEV, and IPII…SICV. Residues 313–443 are Cytoplasmic-facing; the sequence is SLITVNIFYR…WRFMAMVIDR (131 aa). Positions 356 to 384 are disordered; that stretch reads KPKREKKKEEEEDEESNAGGKEEESELIS. The helical transmembrane segment at 444 to 464 threads the bilayer; that stretch reads ASLFLFTGLIFGTTFVIFAAC.

This sequence belongs to the ligand-gated ion channel (TC 1.A.9) family. Acetylcholine receptor (TC 1.A.9.1) subfamily. Neuronal AChR seems to be composed of two different type of subunits: alpha and beta.

The protein localises to the postsynaptic cell membrane. Its subcellular location is the cell membrane. Functionally, after binding acetylcholine, the AChR responds by an extensive change in conformation that affects all subunits and leads to opening of an ion-conducting channel across the plasma membrane. Nicotinic acetylcholine receptor in the MC pharyngeal motor neuron involved in pharyngeal pumping. Has a role in the determination of life span possibly via calorific restriction which affects growth rate, although this is independent of metabolic activity. The protein is Neuronal acetylcholine receptor subunit eat-2 of Caenorhabditis briggsae.